The chain runs to 101 residues: Large ribosomal subunit protein eL43 (101 aa).

Residues 40–62 (CPSCRSLVRLKRLAFGIWQCPKC) form a C4-type zinc finger.

The protein belongs to the eukaryotic ribosomal protein eL43 family. Requires Zn(2+) as cofactor.

The sequence is that of Large ribosomal subunit protein eL43 from Pyrobaculum islandicum (strain DSM 4184 / JCM 9189 / GEO3).